Here is a 579-residue protein sequence, read N- to C-terminus: Glutamine--tRNA ligase (579 aa).

Positions 41–51 match the 'HIGH' region motif; it reads PEPNGYLHIGH. ATP contacts are provided by residues 42–44 and 48–54; these read EPN and HIGHAKA. D74 and Y218 together coordinate L-glutamine. Residues T237, 285 to 286, and 293 to 295 contribute to the ATP site; these read RL and MSK. A 'KMSKS' region motif is present at residues 292–296; the sequence is VMSKR.

It belongs to the class-I aminoacyl-tRNA synthetase family. As to quaternary structure, monomer.

The protein localises to the cytoplasm. The catalysed reaction is tRNA(Gln) + L-glutamine + ATP = L-glutaminyl-tRNA(Gln) + AMP + diphosphate. This chain is Glutamine--tRNA ligase, found in Xanthomonas campestris pv. campestris (strain 8004).